Consider the following 137-residue polypeptide: Large ribosomal subunit protein uL16 (137 aa).

This sequence belongs to the universal ribosomal protein uL16 family. As to quaternary structure, part of the 50S ribosomal subunit.

Functionally, binds 23S rRNA and is also seen to make contacts with the A and possibly P site tRNAs. The sequence is that of Large ribosomal subunit protein uL16 from Xanthomonas campestris pv. campestris (strain 8004).